The primary structure comprises 207 residues: Protein GrpE (207 aa).

This sequence belongs to the GrpE family. As to quaternary structure, homodimer.

The protein localises to the cytoplasm. Functionally, participates actively in the response to hyperosmotic and heat shock by preventing the aggregation of stress-denatured proteins, in association with DnaK and GrpE. It is the nucleotide exchange factor for DnaK and may function as a thermosensor. Unfolded proteins bind initially to DnaJ; upon interaction with the DnaJ-bound protein, DnaK hydrolyzes its bound ATP, resulting in the formation of a stable complex. GrpE releases ADP from DnaK; ATP binding to DnaK triggers the release of the substrate protein, thus completing the reaction cycle. Several rounds of ATP-dependent interactions between DnaJ, DnaK and GrpE are required for fully efficient folding. The sequence is that of Protein GrpE from Pelodictyon phaeoclathratiforme (strain DSM 5477 / BU-1).